A 103-amino-acid polypeptide reads, in one-letter code: Small ribosomal subunit protein uS10 (103 aa).

It belongs to the universal ribosomal protein uS10 family. In terms of assembly, part of the 30S ribosomal subunit.

Its function is as follows. Involved in the binding of tRNA to the ribosomes. This is Small ribosomal subunit protein uS10 from Leptothrix cholodnii (strain ATCC 51168 / LMG 8142 / SP-6) (Leptothrix discophora (strain SP-6)).